A 205-amino-acid polypeptide reads, in one-letter code: MTKIVRSKYKASRRLGVSLWGDSKDAFNIRNYRPGQHGQNTMIKTSDYGLHLKAKQRLKCHYGRVTEKQFRNIFELAQKMKGNTGENFIGLLESRLDTVVYRMNIAPTIFAARQLVSHGHIKLNGKKADIASIRLKEGDVVEVKESIKQIALIQESILKQGQTTPNYLSFDVPSLTGKYLRVPNLSDVPYPFEAEVHLVIELYSR.

In terms of domain architecture, S4 RNA-binding spans 94–157 (SRLDTVVYRM…KQIALIQESI (64 aa)).

This sequence belongs to the universal ribosomal protein uS4 family. As to quaternary structure, part of the 30S ribosomal subunit. Contacts protein S5. The interaction surface between S4 and S5 is involved in control of translational fidelity.

One of the primary rRNA binding proteins, it binds directly to 16S rRNA where it nucleates assembly of the body of the 30S subunit. In terms of biological role, with S5 and S12 plays an important role in translational accuracy. The sequence is that of Small ribosomal subunit protein uS4 from Rickettsia canadensis (strain McKiel).